A 539-amino-acid polypeptide reads, in one-letter code: uncharacterized protein (539 aa).

ABC transporter domains follow at residues 8–265 (VRIT…SRAL) and 307–537 (IELD…IGDM). ATP is bound at residue 339-346 (GDNGSGKS).

Belongs to the ABC transporter superfamily.

It is found in the mitochondrion. This is an uncharacterized protein from Saccharomyces cerevisiae (strain ATCC 204508 / S288c) (Baker's yeast).